The chain runs to 285 residues: Shikimate dehydrogenase (NADP(+)) (285 aa).

Residues 20–22 and S67 contribute to the shikimate site; that span reads SIS. K71 (proton acceptor) is an active-site residue. 2 residues coordinate shikimate: N92 and D107. NADP(+)-binding positions include 129–133 and I227; that span reads GAGGA. Y229 serves as a coordination point for shikimate. Position 250 (G250) interacts with NADP(+).

It belongs to the shikimate dehydrogenase family. As to quaternary structure, homodimer.

It catalyses the reaction shikimate + NADP(+) = 3-dehydroshikimate + NADPH + H(+). It participates in metabolic intermediate biosynthesis; chorismate biosynthesis; chorismate from D-erythrose 4-phosphate and phosphoenolpyruvate: step 4/7. Its function is as follows. Involved in the biosynthesis of the chorismate, which leads to the biosynthesis of aromatic amino acids. Catalyzes the reversible NADPH linked reduction of 3-dehydroshikimate (DHSA) to yield shikimate (SA). This chain is Shikimate dehydrogenase (NADP(+)), found in Streptococcus thermophilus (strain ATCC BAA-491 / LMD-9).